Reading from the N-terminus, the 392-residue chain is Zinc finger protein CONSTANS-LIKE 7 (392 aa).

Zn(2+) is bound by residues cysteine 22, cysteine 25, cysteine 46, and histidine 51. The B box-type; atypical zinc finger occupies 22–65 (CDACMKRSRASWYCPADDAFLCQSCDASIHSANHLAKRHERVRL). Residues 226–254 (KEENKVGFEINCKDLKRVKDEDEEEEEAK) adopt a coiled-coil conformation. Disordered regions lie at residues 246–271 (EDEE…SNDK) and 326–346 (SDGS…GERE). Residues 259–271 (GSKDSDREASNDK) show a composition bias toward basic and acidic residues. Positions 345-387 (REARVLRYKEKRRTRLFSKKIRYEVRKLNAEQRPRIKGRFVKR) constitute a CCT domain.

Belongs to the CONSTANS family.

It localises to the nucleus. In Arabidopsis thaliana (Mouse-ear cress), this protein is Zinc finger protein CONSTANS-LIKE 7 (COL7).